We begin with the raw amino-acid sequence, 521 residues long: Cytochrome P450 monooxygenase astF (521 aa).

Residues 14–34 (TMATFLLPVAIGTIILLFLYG) traverse the membrane as a helical segment. N-linked (GlcNAc...) asparagine glycans are attached at residues Asn198, Asn218, Asn268, and Asn281. Heme is bound at residue Cys430.

It belongs to the cytochrome P450 family. Heme serves as cofactor.

The protein resides in the membrane. It participates in secondary metabolite biosynthesis; terpenoid biosynthesis. In terms of biological role, cytochrome P450 monooxygenase; part of the gene cluster that mediates the biosynthesis of astellolides, drimane-type sesquiterpene esters that show antimicrobial, anti-inflammatory, and anti-tumor activities. The first step in astellolide biosynthesis is performed by the sesquiterpene cyclase astC that catalyzes the formation of drimanyl pyrophosphate from farnesyl pyrophosphate. Drimanyl pyrophosphate is then dephosphorylated by the sesquiterpene phosphatase astI to produce drimanyl monophosphate which is further dephosphorylated to drim-8-ene-11-ol by atsK. Drim-8-ene-11-ol is converted to confertifolin, probably by the cytochrome P450 monooxygenase astD and/or the dehydrogenase astE. The cytochrome P450 monooxygenases astB, astF and astJ then hydroxylate confertifolin at C6, C14, or C15 to form trihydroxy confertifolin. The nonribosomal peptide synthetase astA catalyzes ester bond formation between trihydroxy contifolin and benzoic acid (BA) or 4-hydroxy benzoic acid (4HBA), leading to the formation of dideacetyl astellolides A and B, respectively. Finally, the O-acetyltransferase astG converts dideacetyl astellolides A and B into deacetyl astellolides A and B. The sequence is that of Cytochrome P450 monooxygenase astF from Aspergillus oryzae (strain ATCC 42149 / RIB 40) (Yellow koji mold).